The chain runs to 450 residues: NADH-ubiquinone oxidoreductase chain 2 (450 aa).

The next 13 membrane-spanning stretches (helical) occupy residues 25–45 (GTIT…IVAM), 58–78 (LTPY…MLLM), 90–110 (SPFY…FPLV), 113–133 (LIAL…LTGL), 145–165 (LLYF…SYFV), 186–206 (AFDY…MAPL), 219–239 (TYIT…WIFA), 248–268 (VTIL…LFQV), 272–292 (TMLA…MMSY), 295–315 (AFYI…LGML), 344–364 (LAFS…TPGF), 385–405 (AIVV…KVLF), and 414–436 (NFIN…SFFM).

This sequence belongs to the complex I subunit 2 family.

Its subcellular location is the mitochondrion inner membrane. The catalysed reaction is a ubiquinone + NADH + 5 H(+)(in) = a ubiquinol + NAD(+) + 4 H(+)(out). Core subunit of the mitochondrial membrane respiratory chain NADH dehydrogenase (Complex I) that is believed to belong to the minimal assembly required for catalysis. Complex I functions in the transfer of electrons from NADH to the respiratory chain. The immediate electron acceptor for the enzyme is believed to be ubiquinone. This is NADH-ubiquinone oxidoreductase chain 2 (ND2) from Debaryomyces hansenii (strain ATCC 36239 / CBS 767 / BCRC 21394 / JCM 1990 / NBRC 0083 / IGC 2968) (Yeast).